We begin with the raw amino-acid sequence, 433 residues long: MTDFSPREIVSELDRFIVGQADAKRAVAIALRNRWRRLQLEGILREEVLPKNILMIGPTGVGKTEIARRLAKLAGAPFLKVEATKFTEVGYVGRDVEQIIRDLVEVAIAQVRERKRKDVQARAQIAAEERVLDALVGPGSSPATRDSFRRKLRAGDLNDKEIEVETQASSGSPMFEIPGMPGGQIGAISIGDIFGKMGGRTKTRRLTVADSHDILINEEADKLLDNDQLVQEAINVVENNGIVFLDEIDKICVRDGRSGGEVSREGVQRDLLPLIEGTTVATKHGAVKTEHILFIASGAFHIAKPSDLLPELQGRLPIRVELNALTRDDMRRILTEPEASLIKQYIALLQTEGVTLEFSDDAIDALADVAVGVNSTVENIGARRLQTVMERVLDEISFVAPDRGGETIRIDADYVQKNVGDLAKNTDLSRFIL.

ATP-binding positions include Val-18, 60–65, Asp-246, Glu-311, and Arg-383; that span reads GVGKTE.

This sequence belongs to the ClpX chaperone family. HslU subfamily. A double ring-shaped homohexamer of HslV is capped on each side by a ring-shaped HslU homohexamer. The assembly of the HslU/HslV complex is dependent on binding of ATP.

It is found in the cytoplasm. In terms of biological role, ATPase subunit of a proteasome-like degradation complex; this subunit has chaperone activity. The binding of ATP and its subsequent hydrolysis by HslU are essential for unfolding of protein substrates subsequently hydrolyzed by HslV. HslU recognizes the N-terminal part of its protein substrates and unfolds these before they are guided to HslV for hydrolysis. The polypeptide is ATP-dependent protease ATPase subunit HslU (Rhodopseudomonas palustris (strain BisB5)).